The primary structure comprises 214 residues: Large ribosomal subunit protein uL16-like (214 aa).

Belongs to the universal ribosomal protein uL16 family. As to quaternary structure, component of the 60S large ribosomal subunit (LSU).

The protein resides in the cytoplasm. Functionally, testis-specific component of the ribosome, which is required for the transition from prophase to metaphase in male meiosis I. Compensates for the inactivated X-linked RPL10 paralog during spermatogenesis. The ribosome is a large ribonucleoprotein complex responsible for the synthesis of proteins in the cell. The small ribosomal subunit (SSU) binds messenger RNAs (mRNAs) and translates the encoded message by selecting cognate aminoacyl-transfer RNA (tRNA) molecules. The large subunit (LSU) contains the ribosomal catalytic site termed the peptidyl transferase center (PTC), which catalyzes the formation of peptide bonds, thereby polymerizing the amino acids delivered by tRNAs into a polypeptide chain. The nascent polypeptides leave the ribosome through a tunnel in the LSU and interact with protein factors that function in enzymatic processing, targeting, and the membrane insertion of nascent chains at the exit of the ribosomal tunnel. The polypeptide is Large ribosomal subunit protein uL16-like (RPL10L) (Bos taurus (Bovine)).